The sequence spans 439 residues: Tubulin beta chain (439 aa).

Residues glutamine 11, glutamate 69, serine 138, glycine 142, threonine 143, glycine 144, asparagine 204, and asparagine 226 each contribute to the GTP site. Glutamate 69 lines the Mg(2+) pocket.

It belongs to the tubulin family. As to quaternary structure, dimer of alpha and beta chains. A typical microtubule is a hollow water-filled tube with an outer diameter of 25 nm and an inner diameter of 15 nM. Alpha-beta heterodimers associate head-to-tail to form protofilaments running lengthwise along the microtubule wall with the beta-tubulin subunit facing the microtubule plus end conferring a structural polarity. Microtubules usually have 13 protofilaments but different protofilament numbers can be found in some organisms and specialized cells. Mg(2+) is required as a cofactor.

The protein resides in the cytoplasm. It is found in the cytoskeleton. Tubulin is the major constituent of microtubules, a cylinder consisting of laterally associated linear protofilaments composed of alpha- and beta-tubulin heterodimers. Microtubules grow by the addition of GTP-tubulin dimers to the microtubule end, where a stabilizing cap forms. Below the cap, tubulin dimers are in GDP-bound state, owing to GTPase activity of alpha-tubulin. The sequence is that of Tubulin beta chain (TUB2) from Encephalitozoon intestinalis (Microsporidian parasite).